Here is a 437-residue protein sequence, read N- to C-terminus: UDP-N-acetylmuramate--L-alanine ligase (437 aa).

Gly-108–Ser-114 provides a ligand contact to ATP.

It belongs to the MurCDEF family.

Its subcellular location is the cytoplasm. The enzyme catalyses UDP-N-acetyl-alpha-D-muramate + L-alanine + ATP = UDP-N-acetyl-alpha-D-muramoyl-L-alanine + ADP + phosphate + H(+). It functions in the pathway cell wall biogenesis; peptidoglycan biosynthesis. Functionally, cell wall formation. This chain is UDP-N-acetylmuramate--L-alanine ligase, found in Staphylococcus aureus (strain JH9).